The primary structure comprises 183 residues: Adenine phosphoribosyltransferase (183 aa).

Belongs to the purine/pyrimidine phosphoribosyltransferase family. In terms of assembly, homodimer.

Its subcellular location is the cytoplasm. The enzyme catalyses AMP + diphosphate = 5-phospho-alpha-D-ribose 1-diphosphate + adenine. The protein operates within purine metabolism; AMP biosynthesis via salvage pathway; AMP from adenine: step 1/1. In terms of biological role, catalyzes a salvage reaction resulting in the formation of AMP, that is energically less costly than de novo synthesis. In Salmonella typhi, this protein is Adenine phosphoribosyltransferase.